The sequence spans 228 residues: Ribose-5-phosphate isomerase A (228 aa).

Substrate is bound by residues 32-35 (TGST), 85-88 (DGAD), and 98-101 (KGGG). E107 serves as the catalytic Proton acceptor. Residue K125 participates in substrate binding.

This sequence belongs to the ribose 5-phosphate isomerase family. Homodimer.

The catalysed reaction is aldehydo-D-ribose 5-phosphate = D-ribulose 5-phosphate. It functions in the pathway carbohydrate degradation; pentose phosphate pathway; D-ribose 5-phosphate from D-ribulose 5-phosphate (non-oxidative stage): step 1/1. In terms of biological role, catalyzes the reversible conversion of ribose-5-phosphate to ribulose 5-phosphate. This chain is Ribose-5-phosphate isomerase A, found in Cupriavidus taiwanensis (strain DSM 17343 / BCRC 17206 / CCUG 44338 / CIP 107171 / LMG 19424 / R1) (Ralstonia taiwanensis (strain LMG 19424)).